Reading from the N-terminus, the 208-residue chain is Uracil phosphoribosyltransferase (208 aa).

5-phospho-alpha-D-ribose 1-diphosphate-binding positions include Arg-78, Arg-103, and 130 to 138 (DPMFATGGT). Uracil is bound by residues Ile-193 and 198–200 (GDA). Residue Asp-199 coordinates 5-phospho-alpha-D-ribose 1-diphosphate.

The protein belongs to the UPRTase family. Mg(2+) serves as cofactor.

It catalyses the reaction UMP + diphosphate = 5-phospho-alpha-D-ribose 1-diphosphate + uracil. The protein operates within pyrimidine metabolism; UMP biosynthesis via salvage pathway; UMP from uracil: step 1/1. Allosterically activated by GTP. Its function is as follows. Catalyzes the conversion of uracil and 5-phospho-alpha-D-ribose 1-diphosphate (PRPP) to UMP and diphosphate. This is Uracil phosphoribosyltransferase from Campylobacter jejuni subsp. jejuni serotype O:6 (strain 81116 / NCTC 11828).